A 198-amino-acid polypeptide reads, in one-letter code: Dephospho-CoA kinase (198 aa).

A DPCK domain is found at 3 to 198 (LIGLTGGIAS…VDALWAGLRG (196 aa)). 11–16 (ASGKST) serves as a coordination point for ATP.

Belongs to the CoaE family.

It localises to the cytoplasm. It carries out the reaction 3'-dephospho-CoA + ATP = ADP + CoA + H(+). The protein operates within cofactor biosynthesis; coenzyme A biosynthesis; CoA from (R)-pantothenate: step 5/5. Catalyzes the phosphorylation of the 3'-hydroxyl group of dephosphocoenzyme A to form coenzyme A. This chain is Dephospho-CoA kinase, found in Leifsonia xyli subsp. xyli (strain CTCB07).